A 204-amino-acid chain; its full sequence is Dephospho-CoA kinase (204 aa).

Residues 13–204 (RIGLTGGIAS…LWKNTIKKLV (192 aa)) form the DPCK domain. Residue 21-26 (ASGKST) participates in ATP binding.

Belongs to the CoaE family.

It is found in the cytoplasm. The enzyme catalyses 3'-dephospho-CoA + ATP = ADP + CoA + H(+). It participates in cofactor biosynthesis; coenzyme A biosynthesis; CoA from (R)-pantothenate: step 5/5. Catalyzes the phosphorylation of the 3'-hydroxyl group of dephosphocoenzyme A to form coenzyme A. This Prochlorococcus marinus subsp. pastoris (strain CCMP1986 / NIES-2087 / MED4) protein is Dephospho-CoA kinase.